Reading from the N-terminus, the 1021-residue chain is Sodium/potassium-transporting ATPase subunit alpha-1 (1021 aa).

A propeptide spanning residues methionine 1–valine 5 is cleaved from the precursor. Positions methionine 1 to glutamate 11 are enriched in basic and acidic residues. The segment at methionine 1–glutamate 36 is disordered. Residues glycine 6–proline 85 lie on the Cytoplasmic side of the membrane. Position 9 is an N6-acetyllysine (lysine 9). Tyrosine 10 carries the phosphotyrosine modification. Serine 16 is modified (phosphoserine; by PKC). Position 21 is an N6-acetyllysine (lysine 21). Over residues lysine 26–glutamate 36 the composition is skewed to basic and acidic residues. Phosphoserine is present on residues serine 38 and serine 45. The tract at residues proline 80 to proline 82 is phosphoinositide-3 kinase binding. A helical membrane pass occupies residues glutamate 86–alanine 106. Topologically, residues valine 107–tyrosine 129 are extracellular. Residues leucine 130–alanine 150 traverse the membrane as a helical segment. The Cytoplasmic segment spans residues lysine 151–isoleucine 286. Serine 226 is subject to Phosphoserine. Phosphotyrosine is present on tyrosine 258. The helical transmembrane segment at glutamate 287 to isoleucine 306 threads the bilayer. The Extracellular portion of the chain corresponds to leucine 307–alanine 318. The chain crosses the membrane as a helical span at residues valine 319–alanine 336. The Cytoplasmic segment spans residues threonine 337 to leucine 770. Catalysis depends on aspartate 374, which acts as the 4-aspartylphosphate intermediate. Residues serine 450 and serine 482 each carry the phosphoserine modification. Lysine 485 is an ATP binding site. Phosphotyrosine is present on tyrosine 540. The segment at arginine 594–aspartate 715 is mediates interaction with SCN7A. Serine 666 is subject to Phosphoserine. Mg(2+) is bound by residues aspartate 715 and aspartate 719. Residues lysine 771–isoleucine 790 traverse the membrane as a helical segment. The Extracellular segment spans residues phenylalanine 791 to leucine 800. Residues glycine 801–alanine 821 form a helical membrane-spanning segment. At tyrosine 822–lysine 841 the chain is on the cytoplasmic side. Residues leucine 842–phenylalanine 864 traverse the membrane as a helical segment. Residues phenylalanine 865–cysteine 916 lie on the Extracellular side of the membrane. A helical membrane pass occupies residues histidine 917 to lysine 936. Residues threonine 937 to asparagine 949 lie on the Cytoplasmic side of the membrane. The residue at position 941 (serine 941) is a Phosphoserine; by PKA. Residues lysine 950–tyrosine 968 form a helical membrane-spanning segment. Residues cysteine 969 to proline 983 are Extracellular-facing. A helical transmembrane segment spans residues threonine 984–lysine 1004. The Cytoplasmic segment spans residues leucine 1005 to tyrosine 1021.

It belongs to the cation transport ATPase (P-type) (TC 3.A.3) family. Type IIC subfamily. In terms of assembly, the sodium/potassium-transporting ATPase is composed of a catalytic alpha subunit, an auxiliary non-catalytic beta subunit and an additional regulatory subunit. Interacts with regulatory subunit FXYD1. Interacts with regulatory subunit FXYD3. Interacts with SIK1. Interacts with SLC35G1 and STIM1. Interacts with CLN3; this interaction regulates the sodium/potassium-transporting ATPase complex localization at the plasma membrane. Interacts with SCN7A; activates ATP1A1 P-type sodium:potassium-exchanging transporter activity which indirectly signals to nearby neurons to regulate sodium homeostasis. In terms of processing, phosphorylation on Tyr-10 modulates pumping activity. Phosphorylation of Ser-941 by PKA modulates the response of ATP1A1 to PKC. Dephosphorylation by protein phosphatase 2A (PP2A) following increases in intracellular sodium, leading to increase catalytic activity.

It is found in the cell membrane. It localises to the basolateral cell membrane. Its subcellular location is the sarcolemma. The protein resides in the cell projection. The protein localises to the axon. It is found in the melanosome. It catalyses the reaction K(+)(out) + Na(+)(in) + ATP + H2O = K(+)(in) + Na(+)(out) + ADP + phosphate + H(+). In terms of biological role, this is the catalytic component of the active enzyme, which catalyzes the hydrolysis of ATP coupled with the exchange of sodium and potassium ions across the plasma membrane. This action creates the electrochemical gradient of sodium and potassium ions, providing the energy for active transport of various nutrients. Could also be part of an osmosensory signaling pathway that senses body-fluid sodium levels and controls salt intake behavior as well as voluntary water intake to regulate sodium homeostasis. The protein is Sodium/potassium-transporting ATPase subunit alpha-1 (ATP1A1) of Bos taurus (Bovine).